Reading from the N-terminus, the 153-residue chain is Large ribosomal subunit protein uL30 (153 aa).

It belongs to the universal ribosomal protein uL30 family. As to quaternary structure, part of the 50S ribosomal subunit.

The sequence is that of Large ribosomal subunit protein uL30 from Methanosarcina acetivorans (strain ATCC 35395 / DSM 2834 / JCM 12185 / C2A).